A 248-amino-acid polypeptide reads, in one-letter code: tRNA (guanine-N(7)-)-methyltransferase (248 aa).

Residues G70, 93–94 (EI), 129–130 (NA), and L149 contribute to the S-adenosyl-L-methionine site. D152 is a catalytic residue. Residue 227-229 (SEE) participates in S-adenosyl-L-methionine binding.

Belongs to the class I-like SAM-binding methyltransferase superfamily. TrmB family.

It localises to the nucleus. It carries out the reaction guanosine(46) in tRNA + S-adenosyl-L-methionine = N(7)-methylguanosine(46) in tRNA + S-adenosyl-L-homocysteine. It functions in the pathway tRNA modification; N(7)-methylguanine-tRNA biosynthesis. Catalyzes the formation of N(7)-methylguanine at position 46 (m7G46) in tRNA. This is tRNA (guanine-N(7)-)-methyltransferase from Drosophila mojavensis (Fruit fly).